The chain runs to 282 residues: Chlorite dismutase (282 aa).

The N-terminal stretch at 1 to 31 (MTNLSIHNFKLSLVAAVIGSAMVMTSSPVAA) is a signal peptide. Glu104 is a Ca(2+) binding site. His204 contributes to the heme binding site. Arg217 (proton acceptor) is an active-site residue. Residues Asp226 and Thr265 each contribute to the Ca(2+) site.

Belongs to the chlorite dismutase family. In terms of assembly, homopentamer. It depends on heme b as a cofactor.

The protein resides in the periplasm. The enzyme catalyses chloride + O2 = chlorite. In terms of biological role, catalyzes the heme-dependent decomposition of chlorite to O(2) and chloride with high efficiency and specificity. Used to detoxify chlorite, a by-product of the reduction of perchlorate, a primarily anthropogenic pollutant, in perchlorate-respiring bacteria. In Dechloromonas aromatica (strain RCB), this protein is Chlorite dismutase.